The chain runs to 461 residues: Bifunctional protein GlmU (461 aa).

Residues 1–232 form a pyrophosphorylase region; the sequence is MNLQIIILAA…SFEVQGINNR (232 aa). UDP-N-acetyl-alpha-D-glucosamine-binding positions include 8–11, K22, Q73, and 78–79; these read LAAG and GT. D102 is a Mg(2+) binding site. G142, E157, and N230 together coordinate UDP-N-acetyl-alpha-D-glucosamine. Mg(2+) is bound at residue N230. A linker region spans residues 233–253; it reads QQLQQLERIWQQRAANQLMEK. The interval 254–461 is N-acetyltransferase; it reads GATLADANRF…WKRPVKRERD (208 aa). UDP-N-acetyl-alpha-D-glucosamine is bound by residues R336 and K354. H366 serves as the catalytic Proton acceptor. UDP-N-acetyl-alpha-D-glucosamine is bound by residues Y369 and N380. Acetyl-CoA contacts are provided by residues A383, 389–390, S408, and A426; that span reads NY.

It in the N-terminal section; belongs to the N-acetylglucosamine-1-phosphate uridyltransferase family. The protein in the C-terminal section; belongs to the transferase hexapeptide repeat family. Homotrimer. Mg(2+) serves as cofactor.

It is found in the cytoplasm. The catalysed reaction is alpha-D-glucosamine 1-phosphate + acetyl-CoA = N-acetyl-alpha-D-glucosamine 1-phosphate + CoA + H(+). It carries out the reaction N-acetyl-alpha-D-glucosamine 1-phosphate + UTP + H(+) = UDP-N-acetyl-alpha-D-glucosamine + diphosphate. Its pathway is nucleotide-sugar biosynthesis; UDP-N-acetyl-alpha-D-glucosamine biosynthesis; N-acetyl-alpha-D-glucosamine 1-phosphate from alpha-D-glucosamine 6-phosphate (route II): step 2/2. It functions in the pathway nucleotide-sugar biosynthesis; UDP-N-acetyl-alpha-D-glucosamine biosynthesis; UDP-N-acetyl-alpha-D-glucosamine from N-acetyl-alpha-D-glucosamine 1-phosphate: step 1/1. It participates in bacterial outer membrane biogenesis; LPS lipid A biosynthesis. Its function is as follows. Catalyzes the last two sequential reactions in the de novo biosynthetic pathway for UDP-N-acetylglucosamine (UDP-GlcNAc). The C-terminal domain catalyzes the transfer of acetyl group from acetyl coenzyme A to glucosamine-1-phosphate (GlcN-1-P) to produce N-acetylglucosamine-1-phosphate (GlcNAc-1-P), which is converted into UDP-GlcNAc by the transfer of uridine 5-monophosphate (from uridine 5-triphosphate), a reaction catalyzed by the N-terminal domain. This Legionella pneumophila (strain Corby) protein is Bifunctional protein GlmU.